The chain runs to 464 residues: MANEPYIVRDISLAGWGRKEIDIAEGEMPGLMALREEYAAKKPLKGARITGSLHMTIQTAVLIETLVDLGAEVRWASCNIFSTQDHAAAAIAEQNIPVFAVKGESLEEYWDYVDRIFDWGKGETANMILDDGGDATMFVLWGAKLEAGVEFPAPQNEEEEIFQKTVRRRVAATPGFLTKTAKAIKGVSEETTTGVHRLYEIAKKGELLFPAINVNDSVTKSKFDNLYGCKESLVDAIRRATDVMLAGKVACVAGFGDVGKGSAASLRNGGARVLVTEVDPICALQAAMEGYEVVTLEEAAPRADIFVTCTGNADIITLDHMRAMKQHAIVCNIGHFDSEIQINSLANMKWTEIKPQVDLVKFPDGKEIIVLAKGRLVNLGCATGHPSFVMSASFTNQVLAQIELFCNTDKYQKDVYMLPKHLDEKVAALHLPKLGVHLSKLTQKQADYIGVPVNGPFKPDHYRY.

Substrate contacts are provided by threonine 56, aspartate 131, and glutamate 190. Residue 191–193 coordinates NAD(+); it reads TTT. Residues lysine 220 and aspartate 224 each coordinate substrate. NAD(+) contacts are provided by residues asparagine 225, 254 to 259, glutamate 277, asparagine 312, 333 to 335, and asparagine 378; these read GFGDVG and IGH.

Belongs to the adenosylhomocysteinase family. NAD(+) serves as cofactor.

The protein localises to the cytoplasm. The catalysed reaction is S-adenosyl-L-homocysteine + H2O = L-homocysteine + adenosine. The protein operates within amino-acid biosynthesis; L-homocysteine biosynthesis; L-homocysteine from S-adenosyl-L-homocysteine: step 1/1. May play a key role in the regulation of the intracellular concentration of adenosylhomocysteine. The chain is Adenosylhomocysteinase from Zymomonas mobilis subsp. mobilis (strain ATCC 31821 / ZM4 / CP4).